Consider the following 420-residue polypeptide: O-methyltransferase opaF (420 aa).

S-adenosyl-L-methionine is bound by residues Gly262–Gly263, Asp287, and Asp308–Leu309. Catalysis depends on His328, which acts as the Proton acceptor.

The protein belongs to the class I-like SAM-binding methyltransferase superfamily. Cation-independent O-methyltransferase family.

Its pathway is secondary metabolite biosynthesis. Its function is as follows. O-methyltransferase; part of the gene cluster that mediates the biosynthesis of oxepinamides, derivatives of anthranilyl-containing tripeptides that share an oxepin ring and a fused pyrimidinone moiety. The nonribosomal peptide synthetase (NRPS) opaA assembles the quinazolinone core with D-Phe incorporation. The first adenylation domain (A1) of opaA loads and activates anthranilic acid whereas the second A domain (A2) is for activating of L-Phe, which is then converted to D-form by the E domain. The third A domain (A3) is responsible for L-Ile activation and the terminal condensation domain C3 for cyclization and releasing the NRPS product protuboxepin K. The cytochrome P450 monooxygenase opaB then catalyzes alone the oxepin ring formation to convert protuboxepin K into protuboxepin A. The flavoenzyme opaC installs subsequently one hydroxyl group at the oxepin ring, accompanied by double bond migration, to form 15-epi-oxepinamide E. The epimerase opaE changes the D-Phe residue back to L-form, leading to oxepinamide E, which is further methylated at the hydroxyl group at C-12 by the O-methyltransferase OpaF to yield oxepinamide F. The polypeptide is O-methyltransferase opaF (Aspergillus ustus).